Consider the following 397-residue polypeptide: NADH-quinone oxidoreductase subunit H (397 aa).

The next 9 membrane-spanning stretches (helical) occupy residues 7–27 (ALLI…TAFA), 78–98 (LVYT…FGGI), 120–140 (ILAL…GGWA), 164–184 (MGLS…LDIV), 195–215 (WLIL…FAEV), 247–267 (MAEY…FFGG), 283–303 (SWPL…FIWV), 322–342 (LTLP…AFVP), and 353–373 (WLLG…SDAV).

It belongs to the complex I subunit 1 family. NDH-1 is composed of 15 different subunits. Subunits NuoA, H, J, K, L, M, N constitute the membrane sector of the complex.

It localises to the cell membrane. It carries out the reaction a quinone + NADH + 5 H(+)(in) = a quinol + NAD(+) + 4 H(+)(out). In terms of biological role, NDH-1 shuttles electrons from NADH, via FMN and iron-sulfur (Fe-S) centers, to quinones in the respiratory chain. The immediate electron acceptor for the enzyme in this species is believed to be ubiquinone. Couples the redox reaction to proton translocation (for every two electrons transferred, four hydrogen ions are translocated across the cytoplasmic membrane), and thus conserves the redox energy in a proton gradient. This subunit may bind ubiquinone. In Deinococcus radiodurans (strain ATCC 13939 / DSM 20539 / JCM 16871 / CCUG 27074 / LMG 4051 / NBRC 15346 / NCIMB 9279 / VKM B-1422 / R1), this protein is NADH-quinone oxidoreductase subunit H.